Reading from the N-terminus, the 327-residue chain is Phosphate acyltransferase (327 aa).

It belongs to the PlsX family. Homodimer. Probably interacts with PlsY.

The protein resides in the cytoplasm. It carries out the reaction a fatty acyl-[ACP] + phosphate = an acyl phosphate + holo-[ACP]. It functions in the pathway lipid metabolism; phospholipid metabolism. Catalyzes the reversible formation of acyl-phosphate (acyl-PO(4)) from acyl-[acyl-carrier-protein] (acyl-ACP). This enzyme utilizes acyl-ACP as fatty acyl donor, but not acyl-CoA. In Thermosipho africanus (strain TCF52B), this protein is Phosphate acyltransferase.